The sequence spans 91 residues: Class I hydrophobin 3 (91 aa).

The N-terminal stretch at 1–17 is a signal peptide; it reads MLFRLFTIPSIALGVLG. 4 cysteine pairs are disulfide-bonded: Cys-31–Cys-70, Cys-35–Cys-61, Cys-36–Cys-53, and Cys-71–Cys-87.

It belongs to the fungal hydrophobin family. Self-assembles to form functional amyloid fibrils called rodlets. Self-assembly into fibrillar rodlets occurs spontaneously at hydrophobic:hydrophilic interfaces and the rodlets further associate laterally to form amphipathic monolayers. In terms of tissue distribution, expressed in conidia.

The protein resides in the secreted. It localises to the cell wall. Functionally, aerial growth, conidiation, and dispersal of filamentous fungi in the environment rely upon a capability of their secreting small amphipathic proteins called hydrophobins (HPBs) with low sequence identity. Class I can self-assemble into an outermost layer of rodlet bundles on aerial cell surfaces, conferring cellular hydrophobicity that supports fungal growth, development and dispersal; whereas Class II form highly ordered films at water-air interfaces through intermolecular interactions but contribute nothing to the rodlet structure. HYD3 is a class I hydrophobin located on the conidial surface that activates specifically the humoral and cellular immunity of Metarhizium acridum's own host insect, Locusta migratoria manilensis (Meyen) but not that of other non-host insects. Improves the resistance of locusts to both specialist and generalist fungal pathogens (wide host range) when topically applied to the cuticle, but has no effect on the fungal resistance of other insects, including Spodoptera frugiperda and Galleria mellonella. The sequence is that of Class I hydrophobin 3 from Metarhizium acridum (strain CQMa 102).